A 204-amino-acid polypeptide reads, in one-letter code: Guanylate kinase (204 aa).

The Guanylate kinase-like domain maps to 5–184 (GLLLVLSGPS…AVNHIKAIVD (180 aa)). 12–19 (GPSGVGKG) is an ATP binding site.

The protein belongs to the guanylate kinase family.

Its subcellular location is the cytoplasm. It catalyses the reaction GMP + ATP = GDP + ADP. Functionally, essential for recycling GMP and indirectly, cGMP. The polypeptide is Guanylate kinase (Lactobacillus delbrueckii subsp. bulgaricus (strain ATCC 11842 / DSM 20081 / BCRC 10696 / JCM 1002 / NBRC 13953 / NCIMB 11778 / NCTC 12712 / WDCM 00102 / Lb 14)).